A 508-amino-acid chain; its full sequence is BICD family-like cargo adapter 2 (508 aa).

A compositionally biased stretch (low complexity) spans 1–22 (MSSPDGPSFPSGPLSGGASPSG). Disordered stretches follow at residues 1–27 (MSSP…EGFF), 132–152 (LGEQ…ALSE), and 300–351 (AHSL…TSLS). 2 coiled-coil regions span residues 64–300 (AAEL…SELA) and 353–458 (AEIL…DMQV). Basic and acidic residues predominate over residues 135-149 (QRSEQQDSGRERARA). Residues 470-491 (KELSASASSSTPRRAAPRFSLR) are disordered. The segment covering 473-489 (SASASSSTPRRAAPRFS) has biased composition (low complexity).

This sequence belongs to the BICDR family. Interacts with RAB13.

The protein is BICD family-like cargo adapter 2 (BICDL2) of Homo sapiens (Human).